A 341-amino-acid chain; its full sequence is L-threonine 3-dehydrogenase (341 aa).

Cys-38 serves as a coordination point for Zn(2+). Catalysis depends on charge relay system residues Thr-40 and His-43. Positions 63, 64, 93, 96, 99, and 107 each coordinate Zn(2+). NAD(+) is bound by residues Ile-175, Asp-195, Arg-200, 262-264 (LGI), and 286-287 (IY).

The protein belongs to the zinc-containing alcohol dehydrogenase family. Homotetramer. Zn(2+) serves as cofactor.

It is found in the cytoplasm. The enzyme catalyses L-threonine + NAD(+) = (2S)-2-amino-3-oxobutanoate + NADH + H(+). Its pathway is amino-acid degradation; L-threonine degradation via oxydo-reductase pathway; glycine from L-threonine: step 1/2. Functionally, catalyzes the NAD(+)-dependent oxidation of L-threonine to 2-amino-3-ketobutyrate. This is L-threonine 3-dehydrogenase from Salmonella typhi.